The chain runs to 171 residues: Small ribosomal subunit protein uS4 (171 aa).

The S4 RNA-binding domain occupies 103-167 (RRLQTLVHKR…SPMKKQIEAA (65 aa)).

It belongs to the universal ribosomal protein uS4 family. As to quaternary structure, part of the 30S ribosomal subunit. Contacts protein S5. The interaction surface between S4 and S5 is involved in control of translational fidelity.

In terms of biological role, one of the primary rRNA binding proteins, it binds directly to 16S rRNA where it nucleates assembly of the body of the 30S subunit. With S5 and S12 plays an important role in translational accuracy. The protein is Small ribosomal subunit protein uS4 of Methanothermobacter thermautotrophicus (strain ATCC 29096 / DSM 1053 / JCM 10044 / NBRC 100330 / Delta H) (Methanobacterium thermoautotrophicum).